The chain runs to 429 residues: Glutamate-1-semialdehyde 2,1-aminomutase 1 (429 aa).

Residue Lys-268 is modified to N6-(pyridoxal phosphate)lysine.

The protein belongs to the class-III pyridoxal-phosphate-dependent aminotransferase family. HemL subfamily. In terms of assembly, homodimer. The cofactor is pyridoxal 5'-phosphate.

It is found in the cytoplasm. It catalyses the reaction (S)-4-amino-5-oxopentanoate = 5-aminolevulinate. It participates in porphyrin-containing compound metabolism; protoporphyrin-IX biosynthesis; 5-aminolevulinate from L-glutamyl-tRNA(Glu): step 2/2. The chain is Glutamate-1-semialdehyde 2,1-aminomutase 1 from Lysinibacillus sphaericus (strain C3-41).